The sequence spans 155 residues: Ribosomal RNA large subunit methyltransferase H (155 aa).

Residues leucine 73, glycine 104, and 123 to 128 (LSPLTL) each bind S-adenosyl-L-methionine.

The protein belongs to the RNA methyltransferase RlmH family. In terms of assembly, homodimer.

The protein resides in the cytoplasm. It catalyses the reaction pseudouridine(1915) in 23S rRNA + S-adenosyl-L-methionine = N(3)-methylpseudouridine(1915) in 23S rRNA + S-adenosyl-L-homocysteine + H(+). In terms of biological role, specifically methylates the pseudouridine at position 1915 (m3Psi1915) in 23S rRNA. The chain is Ribosomal RNA large subunit methyltransferase H from Pseudomonas savastanoi pv. phaseolicola (strain 1448A / Race 6) (Pseudomonas syringae pv. phaseolicola (strain 1448A / Race 6)).